The following is a 148-amino-acid chain: Protein NrdI (148 aa).

It belongs to the NrdI family.

Functionally, probably involved in ribonucleotide reductase function. This Mycolicibacterium gilvum (strain PYR-GCK) (Mycobacterium gilvum (strain PYR-GCK)) protein is Protein NrdI.